The following is a 433-amino-acid chain: Histidine--tRNA ligase (433 aa).

This sequence belongs to the class-II aminoacyl-tRNA synthetase family. In terms of assembly, homodimer.

It is found in the cytoplasm. The catalysed reaction is tRNA(His) + L-histidine + ATP = L-histidyl-tRNA(His) + AMP + diphosphate + H(+). The chain is Histidine--tRNA ligase from Crocosphaera subtropica (strain ATCC 51142 / BH68) (Cyanothece sp. (strain ATCC 51142)).